The following is a 176-amino-acid chain: Large ribosomal subunit protein uL6 (176 aa).

The protein belongs to the universal ribosomal protein uL6 family. Part of the 50S ribosomal subunit.

In terms of biological role, this protein binds to the 23S rRNA, and is important in its secondary structure. It is located near the subunit interface in the base of the L7/L12 stalk, and near the tRNA binding site of the peptidyltransferase center. This chain is Large ribosomal subunit protein uL6, found in Paraburkholderia phymatum (strain DSM 17167 / CIP 108236 / LMG 21445 / STM815) (Burkholderia phymatum).